A 128-amino-acid polypeptide reads, in one-letter code: VPLGVPVALGVPPSRPPCRPVNVTVAAEKDECPQCLAVTTTACGGYCRTREPVYRSPLGGPAQQACGYGALRYERLALPGCAPGADPTVAVPVALSCRCARCPMATADCTVAGLGPAFCGAPAGFGPQ.

Cystine bridges form between cysteine 18-cysteine 66, cysteine 32-cysteine 81, cysteine 35-cysteine 119, cysteine 43-cysteine 97, cysteine 47-cysteine 99, and cysteine 102-cysteine 109. Residue asparagine 22 is glycosylated (N-linked (GlcNAc...) asparagine).

The protein belongs to the glycoprotein hormones subunit beta family. Heterodimer of a common alpha chain and a unique beta chain which confers biological specificity to thyrotropin, lutropin, follitropin and gonadotropin.

Its subcellular location is the secreted. Promotes spermatogenesis and ovulation by stimulating the testes and ovaries to synthesize steroids. The polypeptide is Lutropin subunit beta (LHB) (Struthio camelus (Common ostrich)).